The following is a 181-amino-acid chain: tRNA-splicing endonuclease (181 aa).

Residues Tyr118, His126, and Lys157 contribute to the active site.

The protein belongs to the tRNA-intron endonuclease family. Archaeal short subfamily. As to quaternary structure, homotetramer; although the tetramer contains four active sites, only two participate in the cleavage. Therefore, it should be considered as a dimer of dimers.

It carries out the reaction pretRNA = a 3'-half-tRNA molecule with a 5'-OH end + a 5'-half-tRNA molecule with a 2',3'-cyclic phosphate end + an intron with a 2',3'-cyclic phosphate and a 5'-hydroxyl terminus.. Its function is as follows. Endonuclease that removes tRNA introns. Cleaves pre-tRNA at the 5'- and 3'-splice sites to release the intron. The products are an intron and two tRNA half-molecules bearing 2',3' cyclic phosphate and 5'-OH termini. Recognizes a pseudosymmetric substrate in which 2 bulged loops of 3 bases are separated by a stem of 4 bp. The sequence is that of tRNA-splicing endonuclease from Hyperthermus butylicus (strain DSM 5456 / JCM 9403 / PLM1-5).